We begin with the raw amino-acid sequence, 507 residues long: Probable bifunctional methylthioribulose-1-phosphate dehydratase/enolase-phosphatase E1 (507 aa).

A2 carries the N-acetylalanine modification. The segment at 2 to 237 (AVAAAAMIGL…AIKLHQLGLD (236 aa)) is methylthioribulose-1-phosphate dehydratase. C109 is a binding site for substrate. Residues H127 and H129 each coordinate Zn(2+). E152 acts as the Proton donor/acceptor in catalysis. H202 provides a ligand contact to Zn(2+). The tract at residues 268-507 (IVLDIEGTTT…FKTVTSFSQI (240 aa)) is enolase-phosphatase E1. Residues D271 and E273 each coordinate Mg(2+). Substrate contacts are provided by residues 406 to 407 (SS) and K440. A Mg(2+)-binding site is contributed by D466.

This sequence in the N-terminal section; belongs to the aldolase class II family. MtnB subfamily. In the C-terminal section; belongs to the HAD-like hydrolase superfamily. MasA/MtnC family. Zn(2+) serves as cofactor. Requires Mg(2+) as cofactor.

The catalysed reaction is 5-(methylsulfanyl)-D-ribulose 1-phosphate = 5-methylsulfanyl-2,3-dioxopentyl phosphate + H2O. It carries out the reaction 5-methylsulfanyl-2,3-dioxopentyl phosphate + H2O = 1,2-dihydroxy-5-(methylsulfanyl)pent-1-en-3-one + phosphate. Its pathway is amino-acid biosynthesis; L-methionine biosynthesis via salvage pathway; L-methionine from S-methyl-5-thio-alpha-D-ribose 1-phosphate: step 2/6. It functions in the pathway amino-acid biosynthesis; L-methionine biosynthesis via salvage pathway; L-methionine from S-methyl-5-thio-alpha-D-ribose 1-phosphate: step 3/6. It participates in amino-acid biosynthesis; L-methionine biosynthesis via salvage pathway; L-methionine from S-methyl-5-thio-alpha-D-ribose 1-phosphate: step 4/6. The polypeptide is Probable bifunctional methylthioribulose-1-phosphate dehydratase/enolase-phosphatase E1 (Arabidopsis thaliana (Mouse-ear cress)).